Here is a 270-residue protein sequence, read N- to C-terminus: Glucosamine-6-phosphate deaminase (270 aa).

Residue Asp-72 is the Proton acceptor; for enolization step of the active site. Asp-141 acts as the For ring-opening step in catalysis. Catalysis depends on His-143, which acts as the Proton acceptor; for ring-opening step. The active-site For ring-opening step is Glu-148.

It belongs to the glucosamine/galactosamine-6-phosphate isomerase family. NagB subfamily.

The catalysed reaction is alpha-D-glucosamine 6-phosphate + H2O = beta-D-fructose 6-phosphate + NH4(+). Its pathway is amino-sugar metabolism; N-acetylneuraminate degradation; D-fructose 6-phosphate from N-acetylneuraminate: step 5/5. Its activity is regulated as follows. Allosterically activated by N-acetylglucosamine 6-phosphate (GlcNAc6P). In terms of biological role, catalyzes the reversible isomerization-deamination of glucosamine 6-phosphate (GlcN6P) to form fructose 6-phosphate (Fru6P) and ammonium ion. The polypeptide is Glucosamine-6-phosphate deaminase (Bacteroides fragilis (strain ATCC 25285 / DSM 2151 / CCUG 4856 / JCM 11019 / LMG 10263 / NCTC 9343 / Onslow / VPI 2553 / EN-2)).